A 175-amino-acid chain; its full sequence is Ribosome maturation factor RimM (175 aa).

Residues 96–175 (EGDYYWHDLI…TIEVDWDAGF (80 aa)) form the PRC barrel domain.

This sequence belongs to the RimM family. In terms of assembly, binds ribosomal protein uS19.

The protein localises to the cytoplasm. Its function is as follows. An accessory protein needed during the final step in the assembly of 30S ribosomal subunit, possibly for assembly of the head region. Essential for efficient processing of 16S rRNA. May be needed both before and after RbfA during the maturation of 16S rRNA. It has affinity for free ribosomal 30S subunits but not for 70S ribosomes. This Actinobacillus succinogenes (strain ATCC 55618 / DSM 22257 / CCUG 43843 / 130Z) protein is Ribosome maturation factor RimM.